A 258-amino-acid chain; its full sequence is UPF0246 protein HS_0482 (258 aa).

This sequence belongs to the UPF0246 family.

The chain is UPF0246 protein HS_0482 from Histophilus somni (strain 129Pt) (Haemophilus somnus).